Reading from the N-terminus, the 195-residue chain is Nicotinamide riboside kinase 1 (195 aa).

ATP is bound at residue 10–18 (GVTNGGKTT). Mg(2+)-binding residues include threonine 17 and aspartate 36. Aspartate 36 acts as the Proton acceptor in catalysis. Substrate is bound by residues 36–39 (DDFF) and 55–56 (YD). Arginine 128 is an ATP binding site. Substrate is bound by residues arginine 129 and 134 to 135 (YE). ATP is bound by residues 132–134 (RVY) and 172–174 (RSE).

The protein belongs to the uridine kinase family. NRK subfamily. As to quaternary structure, monomer.

The enzyme catalyses beta-nicotinamide D-riboside + ATP = beta-nicotinamide D-ribonucleotide + ADP + H(+). It catalyses the reaction beta-D-ribosylnicotinate + ATP = nicotinate beta-D-ribonucleotide + ADP + H(+). It functions in the pathway cofactor biosynthesis; NAD(+) biosynthesis. Its function is as follows. Catalyzes the phosphorylation of nicotinamide riboside (NR) and nicotinic acid riboside (NaR) to form nicotinamide mononucleotide (NMN) and nicotinic acid mononucleotide (NaMN). This is Nicotinamide riboside kinase 1 (Nmrk1) from Mus musculus (Mouse).